Here is a 470-residue protein sequence, read N- to C-terminus: Desmin (470 aa).

Positions 2 to 108 (SQAYSSSQRV…QEFLTTRTNE (107 aa)) are head. Phosphoserine; by CDK1 is present on Ser-7. Ser-12 is subject to Phosphoserine; by AURKB. An Omega-N-methylarginine modification is found at Arg-16. Thr-17 is subject to Phosphothreonine; by AURKB and ROCK1. Ser-28 is modified (phosphoserine; by CDK1). A Phosphoserine modification is found at Ser-31. A Phosphoserine; by CDK1 modification is found at Ser-32. Arg-37 bears the Asymmetric dimethylarginine; alternate mark. Arg-37 bears the Omega-N-methylarginine; alternate mark. Position 45 is a phosphoserine (Ser-45). Arg-58 is modified (ADP-ribosylarginine). Ser-60 bears the Phosphoserine; by AURKB mark. Arg-70 is modified (omega-N-methylarginine). Thr-77 bears the Phosphothreonine; by ROCK1 mark. A Phosphoserine modification is found at Ser-81. One can recognise an IF rod domain in the interval 108–416 (EKVELQELND…KLLEGEESRI (309 aa)). The segment at 109–141 (KVELQELNDRFANYIEKVRFLEQQNAALAAEVN) is coil 1A. The tract at residues 142–151 (RLKGREPTRV) is linker 1. Positions 152-252 (AEIYEEELRE…HEEEIRELQA (101 aa)) are coil 1B. Residues 253 to 268 (QLQEQQVQVEMDMSKP) form a linker 12 region. An interaction with NEB region spans residues 268–415 (PDLTAALRDI…RKLLEGEESR (148 aa)). A coil 2A region spans residues 269–287 (DLTAALRDIRAQYETIAAK). Residues 288–295 (NISEAEEW) are linker 2. Phosphoserine occurs at positions 290, 358, 361, and 424. Residues 296-412 (YKSKVSDLTQ…ATYRKLLEGE (117 aa)) form a coil 2B region. The segment at 413 to 470 (ESRINLPIQTFSALNFRETSPEQRGSEVHTKKTVMIKTIETRDGEVVSEATQQQHEVL) is tail. The tract at residues 438-453 (SEVHTKKTVMIKTIET) is interaction with CRYAB.

This sequence belongs to the intermediate filament family. Homomer. Interacts with DST. Interacts with MTM1. Interacts with EPPK1; interaction is dependent of higher-order structure of intermediate filament. Interacts with CRYAB. Interacts with NEB (via nebulin repeats 160-164). Interacts (via rod region) with NEBL (via nebulin repeats 1-5). Interacts with ASB2; the interaction targets DES for proteasomal degradation. Interacts with PKP1. Interacts with FLII. In terms of processing, ADP-ribosylation prevents ability to form intermediate filaments. Post-translationally, phosphorylation at Ser-7, Ser-28 and Ser-32 by CDK1 and phosphorylation at Ser-60 by AURKB contribute to efficient separation of desmin intermediate filaments during mitosis. Ubiquitination by a SCF-like complex containing ASB2 leads to proteasomal degradation.

It is found in the cytoplasm. It localises to the myofibril. The protein localises to the sarcomere. The protein resides in the z line. Its subcellular location is the cell membrane. It is found in the sarcolemma. It localises to the nucleus. The protein localises to the cell tip. The protein resides in the nucleus envelope. In terms of biological role, muscle-specific type III intermediate filament essential for proper muscular structure and function. Plays a crucial role in maintaining the structure of sarcomeres, inter-connecting the Z-disks and forming the myofibrils, linking them not only to the sarcolemmal cytoskeleton, but also to the nucleus and mitochondria, thus providing strength for the muscle fiber during activity. In adult striated muscle they form a fibrous network connecting myofibrils to each other and to the plasma membrane from the periphery of the Z-line structures. May act as a sarcomeric microtubule-anchoring protein: specifically associates with detyrosinated tubulin-alpha chains, leading to buckled microtubules and mechanical resistance to contraction. Required for nuclear membrane integrity, via anchoring at the cell tip and nuclear envelope, resulting in maintenance of microtubule-derived intracellular mechanical forces. Contributes to the transcriptional regulation of the NKX2-5 gene in cardiac progenitor cells during a short period of cardiomyogenesis and in cardiac side population stem cells in the adult. Plays a role in maintaining an optimal conformation of nebulette (NEB) on heart muscle sarcomeres to bind and recruit cardiac alpha-actin. The polypeptide is Desmin (DES) (Bos taurus (Bovine)).